Reading from the N-terminus, the 491-residue chain is Acetyl-coenzyme A carboxylase carboxyl transferase subunit beta, chloroplastic (491 aa).

Residues 26–49 (ARPRPIGNTNGSQDPSINDRDKNG) form a disordered region. Residues 32 to 41 (GNTNGSQDPS) are compositionally biased toward polar residues. The 270-residue stretch at 222-491 (LWVQCDNCYG…PLNHNSQVKR (270 aa)) folds into the CoA carboxyltransferase N-terminal domain. 4 residues coordinate Zn(2+): cysteine 226, cysteine 229, cysteine 245, and cysteine 248. The C4-type zinc finger occupies 226 to 248 (CDNCYGLNYKKIFSSKMNICEQC).

This sequence belongs to the AccD/PCCB family. Acetyl-CoA carboxylase is a heterohexamer composed of biotin carboxyl carrier protein, biotin carboxylase and 2 subunits each of ACCase subunit alpha and ACCase plastid-coded subunit beta (accD). It depends on Zn(2+) as a cofactor.

The protein resides in the plastid. It is found in the chloroplast stroma. The enzyme catalyses N(6)-carboxybiotinyl-L-lysyl-[protein] + acetyl-CoA = N(6)-biotinyl-L-lysyl-[protein] + malonyl-CoA. It participates in lipid metabolism; malonyl-CoA biosynthesis; malonyl-CoA from acetyl-CoA: step 1/1. Its function is as follows. Component of the acetyl coenzyme A carboxylase (ACC) complex. Biotin carboxylase (BC) catalyzes the carboxylation of biotin on its carrier protein (BCCP) and then the CO(2) group is transferred by the transcarboxylase to acetyl-CoA to form malonyl-CoA. In Ceratophyllum demersum (Rigid hornwort), this protein is Acetyl-coenzyme A carboxylase carboxyl transferase subunit beta, chloroplastic.